Here is an 864-residue protein sequence, read N- to C-terminus: Protein 4.1 (864 aa).

Composition is skewed to polar residues over residues 1–16 (MTTE…NSQH) and 27–41 (NSGQ…SCQT). 3 disordered regions span residues 1–122 (MTTE…GTSL), 136–170 (EPEL…DFEI), and 182–202 (IEVK…ASQK). Position 14 is a phosphoserine (serine 14). Threonine 60 is subject to Phosphothreonine; by CDK1. Residues 61 to 75 (PTHEDLTKNKERTSE) are compositionally biased toward basic and acidic residues. The span at 76 to 87 (SRGLSRLFSSFL) shows a compositional bias: low complexity. 10 positions are modified to phosphoserine: serine 84, serine 85, serine 95, serine 104, serine 121, serine 149, serine 151, serine 152, serine 188, and serine 191. Basic and acidic residues predominate over residues 101–117 (EVESDKEKGEGGQKEIE). Polar residues predominate over residues 149 to 158 (SLSSAETQPA). A compositionally biased stretch (basic and acidic residues) spans 182 to 199 (IEVKEESPQSKAETELKA). Positions 210–491 (MHCKVSLLDD…EHHTFFRLTS (282 aa)) constitute an FERM domain. Tyrosine 222 carries the post-translational modification Phosphotyrosine. Threonine 378 is subject to Phosphothreonine. A hydrophilic region spans residues 494-614 (TIPKSKFLAL…QAEPEPTEAW (121 aa)). 2 disordered regions span residues 518-572 (RQAS…VAEG) and 586-611 (KAQK…PEPT). Phosphoserine is present on residues serine 521, serine 540, serine 542, and serine 555. Over residues 587–600 (AQKETVKAEVKKED) the composition is skewed to basic and acidic residues. Over residues 601-610 (EPPEQAEPEP) the composition is skewed to acidic residues. Residues 615–713 (KVEKTHIEVT…WDKRLSTHSP (99 aa)) are spectrin--actin-binding. The residue at position 660 (tyrosine 660) is a Phosphotyrosine; by EGFR. Phosphoserine occurs at positions 664, 674, 684, and 709. The residue at position 712 (serine 712) is a Phosphoserine; by CDK1. The segment at 714-864 (FRTLNINGQI…VHQETEIADE (151 aa)) is C-terminal (CTD). A phosphothreonine mark is found at threonine 736 and threonine 859.

Binds with a high affinity to glycophorin and with lower affinity to band III protein. Associates with the nuclear mitotic apparatus. Interacts with calmodulin. Interacts with CPAP. Interacts with DLG1. Also found to associate with contractile apparatus and tight junctions. Interacts with NUMA1; this interaction is negatively regulated by CDK1 during metaphase and promotes anaphase-specific localization of NUMA1 in symmetrically dividing cells. Interacts with ATP2B1; regulates small intestinal calcium absorption through regulation of membrane expression of ATP2B1. Post-translationally, phosphorylated at multiple sites by different protein kinases and each phosphorylation event selectively modulates the protein's functions. In terms of processing, phosphorylation on Tyr-660 reduces the ability of 4.1 to promote the assembly of the spectrin/actin/4.1 ternary complex. O-glycosylated; contains N-acetylglucosamine side chains in the C-terminal domain.

The protein localises to the cytoplasm. It localises to the cytoskeleton. The protein resides in the cell cortex. It is found in the nucleus. Its function is as follows. Protein 4.1 is a major structural element of the erythrocyte membrane skeleton. It plays a key role in regulating membrane physical properties of mechanical stability and deformability by stabilizing spectrin-actin interaction. Recruits DLG1 to membranes. Required for dynein-dynactin complex and NUMA1 recruitment at the mitotic cell cortex during anaphase. In Homo sapiens (Human), this protein is Protein 4.1.